A 174-amino-acid chain; its full sequence is Eukaryotic translation elongation factor 1 epsilon-1 (174 aa).

Ala-2 bears the N-acetylalanine mark. The interval 2 to 56 (AAAAELKLLEKSLGLRPGNKYSAQGERQIPVLQTNNGPSLTGLATIATHLVKQAS) is N-terminal. Positions 50–173 (HLVKQASKEH…FIKNRLYANS (124 aa)) constitute a GST C-terminal domain. The interval 57–63 (KEHLLGS) is linker. Residues 64 to 152 (TAEEKALVQQ…SRWFCHIQHY (89 aa)) are C-terminal. Lys-138 is modified (N6-acetyllysine). Positions 153–169 (PDIRQHLSSVVFIKNRL) form a coiled coil.

Part of a multisubunit complex that groups tRNA ligases for Arg (RARS1), Asp (DARS1), Gln (QARS1), Ile (IARS1), Leu (LARS1), Lys (KARS1), Met (MARS1) the bifunctional ligase for Glu and Pro (EPRS1) and the auxiliary subunits AIMP1/p43, AIMP2/p38 and EEF1E1/p18. Can interact simultaneously with MARS1 and EPRS1. Forms a linear complex that contains MARS1, EEF1E1, EPRS1 and AIMP2 that is at the core of the multisubunit complex. Interacts with ATM and ATR. The interaction with ATM, which takes place independently of TP53, is induced by DNA damage that may occur during genotoxic stress or cell growth. The interaction with ATR is enhanced by UV irradiation.

It is found in the cytoplasm. Its subcellular location is the nucleus. Functionally, positive modulator of ATM response to DNA damage. The protein is Eukaryotic translation elongation factor 1 epsilon-1 (EEF1E1) of Cricetulus griseus (Chinese hamster).